Reading from the N-terminus, the 436-residue chain is MEGDELTQNIEQWKIKRLIDNLDKARGNGTSLISLIIPPREQLPIINKMITEEYGKSSNIKSRIVRQAVQSALTSTKERLKLYNNRLPANGLILYCGEVINEEGVCEKKYTIDFQPYRAINTTLYICDNKFHTQPLKDLLVMDDKFGFIIIDGNGTLFGTLQGNTKEVLHKFSVDLPKKHRRGGQSALRFARLRMESRNNYLRKVAEQAVVQFISSDKVNVAGLIIAGSAEFKNVLVQSDLFDQRLAAKVLKIVDVAYGGENGFTQAIELSADTLSNIKFIREKKVMSKFFEEVAQDTKKYCYGVEDTMKSLLMGAVEVILLFENLNFTRYVLKNPTTGIEKTLYLTPEQEENHDNFIENGEELEALEKGPLPEWIVDNYMKFGAGLEFITDRSQEGAQFVRGFGGLGAFLRYQVDMAHLNAGEEELDEEWDDDFM.

This sequence belongs to the eukaryotic release factor 1 family. Heterodimer of two subunits, one of which binds GTP.

The protein resides in the cytoplasm. Functionally, directs the termination of nascent peptide synthesis (translation) in response to the termination codons UAA and UAG. In B.americanum UGA codes for tryptophan. This chain is Eukaryotic peptide chain release factor subunit 1 (eRF1), found in Blepharisma americanum (Ciliate).